Here is a 179-residue protein sequence, read N- to C-terminus: Large ribosomal subunit protein uL5 (179 aa).

Belongs to the universal ribosomal protein uL5 family. As to quaternary structure, part of the 50S ribosomal subunit; part of the 5S rRNA/L5/L18/L25 subcomplex. Contacts the 5S rRNA and the P site tRNA. Forms a bridge to the 30S subunit in the 70S ribosome.

In terms of biological role, this is one of the proteins that bind and probably mediate the attachment of the 5S RNA into the large ribosomal subunit, where it forms part of the central protuberance. In the 70S ribosome it contacts protein S13 of the 30S subunit (bridge B1b), connecting the 2 subunits; this bridge is implicated in subunit movement. Contacts the P site tRNA; the 5S rRNA and some of its associated proteins might help stabilize positioning of ribosome-bound tRNAs. This chain is Large ribosomal subunit protein uL5, found in Azotobacter vinelandii (strain DJ / ATCC BAA-1303).